The chain runs to 146 residues: Large ribosomal subunit protein uL15 (146 aa).

The span at 1–13 shows a compositional bias: basic and acidic residues; the sequence is MKLHELKPAEGSR. Residues 1-57 form a disordered region; the sequence is MKLHELKPAEGSRKVRNRVGRGTSSGNGKTSGRGQKGQKARSGVGLRPGFEGGQTPL. Residues 23 to 35 are compositionally biased toward gly residues; that stretch reads TSSGNGKTSGRGQ.

This sequence belongs to the universal ribosomal protein uL15 family. As to quaternary structure, part of the 50S ribosomal subunit.

Functionally, binds to the 23S rRNA. The protein is Large ribosomal subunit protein uL15 of Streptococcus thermophilus (strain ATCC BAA-491 / LMD-9).